Reading from the N-terminus, the 333-residue chain is Threonine-phosphate decarboxylase (333 aa).

Residue K199 is modified to N6-(pyridoxal phosphate)lysine.

The protein belongs to the class-I pyridoxal-phosphate-dependent aminotransferase family. Homodimer. It depends on pyridoxal 5'-phosphate as a cofactor.

It localises to the cytoplasm. The enzyme catalyses O-phospho-L-threonine + H(+) = (R)-1-aminopropan-2-yl phosphate + CO2. The protein operates within cofactor biosynthesis; adenosylcobalamin biosynthesis. Decarboxylates L-threonine-O-3-phosphate to yield (R)-1-amino-2-propanol O-2-phosphate, the precursor for the linkage between the nucleotide loop and the corrin ring in cobalamin. This Sinorhizobium sp protein is Threonine-phosphate decarboxylase (cobC).